Reading from the N-terminus, the 717-residue chain is Ribosomal RNA large subunit methyltransferase K/L (717 aa).

Residues 44–155 (DAYKVCIYSY…KQFVNVFLCL (112 aa)) form the THUMP domain.

It belongs to the methyltransferase superfamily. RlmKL family.

The protein localises to the cytoplasm. The catalysed reaction is guanosine(2445) in 23S rRNA + S-adenosyl-L-methionine = N(2)-methylguanosine(2445) in 23S rRNA + S-adenosyl-L-homocysteine + H(+). The enzyme catalyses guanosine(2069) in 23S rRNA + S-adenosyl-L-methionine = N(2)-methylguanosine(2069) in 23S rRNA + S-adenosyl-L-homocysteine + H(+). Specifically methylates the guanine in position 2445 (m2G2445) and the guanine in position 2069 (m7G2069) of 23S rRNA. The sequence is that of Ribosomal RNA large subunit methyltransferase K/L from Francisella tularensis subsp. tularensis (strain WY96-3418).